Reading from the N-terminus, the 129-residue chain is Glycine cleavage system H protein (129 aa).

Residues 24 to 106 (TYTVGITEHA…YTGGWIFKIK (83 aa)) enclose the Lipoyl-binding domain. An N6-lipoyllysine modification is found at lysine 65.

It belongs to the GcvH family. In terms of assembly, the glycine cleavage system is composed of four proteins: P, T, L and H. (R)-lipoate serves as cofactor.

Functionally, the glycine cleavage system catalyzes the degradation of glycine. The H protein shuttles the methylamine group of glycine from the P protein to the T protein. The chain is Glycine cleavage system H protein from Salmonella choleraesuis (strain SC-B67).